The chain runs to 523 residues: Succinate-semialdehyde dehydrogenase, mitochondrial (523 aa).

Residues 1–35 (MATCFLLRSFWAARPALPPPGRFRPEPAGTPRRSY) constitute a mitochondrion transit peptide. Lys-74 is subject to N6-acetyllysine. Residue Lys-114 is modified to N6-acetyllysine; alternate. An N6-succinyllysine; alternate modification is found at Lys-114. The residue at position 123 (Lys-123) is an N6-succinyllysine. The residue at position 128 (Lys-128) is an N6-acetyllysine. N6-succinyllysine is present on Lys-172. NAD(+)-binding positions include Arg-201 and 216–219 (KPAE). Arg-201 is a substrate binding site. At Lys-253 the chain carries N6-acetyllysine; alternate. Position 253 is an N6-succinyllysine; alternate (Lys-253). 272-277 (GSTATG) serves as a coordination point for NAD(+). The Proton acceptor role is filled by Glu-294. Residue Arg-322 coordinates substrate. Residue Cys-328 is the Nucleophile of the active site. Cys-328 and Cys-330 form a disulfide bridge. At Lys-347 the chain carries N6-acetyllysine; alternate. At Lys-347 the chain carries N6-succinyllysine; alternate. At Lys-353 the chain carries N6-acetyllysine. Position 390 is an N6-succinyllysine (Lys-390). N6-acetyllysine is present on Lys-399. Ser-403 is subject to Phosphoserine. Ser-486 contacts substrate. Ser-487 is subject to Phosphoserine.

The protein belongs to the aldehyde dehydrogenase family. Homotetramer.

The protein resides in the mitochondrion. The enzyme catalyses succinate semialdehyde + NAD(+) + H2O = succinate + NADH + 2 H(+). Its pathway is amino-acid degradation; 4-aminobutanoate degradation. Redox-regulated. Inhibited under oxydizing conditions. Catalyzes one step in the degradation of the inhibitory neurotransmitter gamma-aminobutyric acid (GABA). The chain is Succinate-semialdehyde dehydrogenase, mitochondrial (Aldh5a1) from Mus musculus (Mouse).